The following is a 212-amino-acid chain: Ras-like protein (212 aa).

Residue 15 to 22 (GGGGVGKS) coordinates GTP. The Effector region motif lies at 37–45 (YDPTIEDSY). Residues 62 to 66 (DTAGQ) and 121 to 124 (NKCD) contribute to the GTP site. 2 S-palmitoyl cysteine lipidation sites follow: Cys205 and Cys206. Residue Cys209 is modified to Cysteine methyl ester. The S-geranylgeranyl cysteine moiety is linked to residue Cys209. Residues 210–212 (IVM) constitute a propeptide, removed in mature form.

Belongs to the small GTPase superfamily. Ras family.

The protein resides in the cell membrane. It carries out the reaction GTP + H2O = GDP + phosphate + H(+). With respect to regulation, alternates between an inactive form bound to GDP and an active form bound to GTP. Activated by a guanine nucleotide-exchange factor (GEF) and inactivated by a GTPase-activating protein (GAP). The protein is Ras-like protein (rasA) of Emericella nidulans (strain FGSC A4 / ATCC 38163 / CBS 112.46 / NRRL 194 / M139) (Aspergillus nidulans).